The sequence spans 597 residues: Aspartate--tRNA ligase (597 aa).

Glu173 provides a ligand contact to L-aspartate. The segment at 197-200 is aspartate; the sequence is QLFK. Residue Arg219 coordinates L-aspartate. Residues 219 to 221 and Gln228 each bind ATP; that span reads RDE. Residue His449 participates in L-aspartate binding. Glu483 is an ATP binding site. Arg490 serves as a coordination point for L-aspartate. 535-538 contributes to the ATP binding site; that stretch reads GLDR.

It belongs to the class-II aminoacyl-tRNA synthetase family. Type 1 subfamily. As to quaternary structure, homodimer.

The protein localises to the cytoplasm. The catalysed reaction is tRNA(Asp) + L-aspartate + ATP = L-aspartyl-tRNA(Asp) + AMP + diphosphate. Functionally, catalyzes the attachment of L-aspartate to tRNA(Asp) in a two-step reaction: L-aspartate is first activated by ATP to form Asp-AMP and then transferred to the acceptor end of tRNA(Asp). The polypeptide is Aspartate--tRNA ligase (Shewanella pealeana (strain ATCC 700345 / ANG-SQ1)).